The following is a 69-amino-acid chain: UPF0434 protein Rmet_0534 (69 aa).

Belongs to the UPF0434 family.

The sequence is that of UPF0434 protein Rmet_0534 from Cupriavidus metallidurans (strain ATCC 43123 / DSM 2839 / NBRC 102507 / CH34) (Ralstonia metallidurans).